The sequence spans 293 residues: Nucleotide-binding protein BCG9842_B5683 (293 aa).

An ATP-binding site is contributed by 14–21 (GMSGAGKT). 65–68 (DLRG) provides a ligand contact to GTP.

It belongs to the RapZ-like family.

Displays ATPase and GTPase activities. This Bacillus cereus (strain G9842) protein is Nucleotide-binding protein BCG9842_B5683.